Here is a 487-residue protein sequence, read N- to C-terminus: Transcriptional adapter ADA2b (487 aa).

Polar residues predominate over residues 1–13; it reads MGRSRGNFQNFED. The tract at residues 1–25 is disordered; that stretch reads MGRSRGNFQNFEDPTQRTRKKKNAA. The ZZ-type zinc-finger motif lies at 42–98; sequence GGKYNCDYCQKDITGKIRIKCAVCPDFDLCIECMSVGAEITPHKCDHPYRVMGNLTF. Cys47, Cys50, Cys62, Cys65, Cys71, Cys74, His84, and His88 together coordinate Zn(2+). One can recognise an SANT domain in the interval 100 to 152; that stretch reads LICPDWSADDEMLLLEGLEIYGLGNWAEVAEHVGTKSKEQCLEHYRNIYLNSP. Lys216 carries the N6-acetyllysine; by GCN5 modification. Over residues 368-383 the composition is skewed to basic and acidic residues; the sequence is RKRKRENEEGMNRGKE. The segment at 368 to 388 is disordered; the sequence is RKRKRENEEGMNRGKESGQFG. In terms of domain architecture, SWIRM spans 401–487; the sequence is QASSSYVNDL…MLVKKGIAQL (87 aa).

Interacts in vitro with the HAT domain of GCN5 and with the DNA-binding domain of the transcriptional activator DREB1B/CBF1. Interacts with BZIP11. Acetylated in vitro by GCN5, but acetylation is not essential for biological activity. In terms of tissue distribution, expressed in roots, leaves, stems, flowers and siliques, with the strongest activity in the meristematic zones.

It localises to the nucleus. Functionally, required for the function of some acidic activation domains, which activate transcription from a distant site. The exact mechanism of action is not yet known. ADA2 stimulates the acetyltransferase activity of GCN5 on free histones or nucleosomes, probably by opening up the promoter region. Mediates auxin and cytokinin signals in the control of cell proliferation and might be involved in repression of a freezing tolerance pathway at warm temperature. Involved in the positive regulation of salt-induced gene expression by maintaining locus-specific acetylation of histones H4 and H3. This Arabidopsis thaliana (Mouse-ear cress) protein is Transcriptional adapter ADA2b (ADA2B).